Consider the following 258-residue polypeptide: Polysialic acid transport protein KpsM (258 aa).

Residues 30–251 enclose the ABC transmembrane type-2 domain; sequence LGYLWAILEP…FIGLALYRTR (222 aa). The next 6 membrane-spanning stretches (helical) occupy residues 33 to 53, 61 to 81, 110 to 130, 144 to 164, 175 to 195, and 227 to 247; these read LWAI…FGYI, ISFP…SSIS, ALLE…IVWM, VLTW…FMVV, LPIL…LHSI, and GVSL…GLAL.

It belongs to the ABC-2 integral membrane protein family.

The protein resides in the cell inner membrane. Functionally, kpsM and KpsT constitute a system for the transport of polysialic acid across the cytoplasmic membrane. The chain is Polysialic acid transport protein KpsM (kpsM) from Escherichia coli.